The primary structure comprises 418 residues: UDP-N-acetyl-D-mannosamine dehydrogenase (418 aa).

5 residues coordinate NAD(+): Tyr-10, Ile-11, Asp-30, Thr-85, and Thr-119. Arg-152, Val-153, Lys-204, Asn-208, Arg-211, His-242, Arg-244, Thr-249, and Gly-255 together coordinate UDP-N-acetyl-alpha-D-mannosaminouronate. Lys-204 (proton donor/acceptor) is an active-site residue. Catalysis depends on Cys-258, which acts as the Nucleophile. Lys-261 is an NAD(+) binding site. UDP-N-acetyl-alpha-D-mannosaminouronate is bound by residues Tyr-318 and Lys-319. Arg-326 contacts NAD(+). Arg-398 serves as a coordination point for UDP-N-acetyl-alpha-D-mannosaminouronate.

This sequence belongs to the UDP-glucose/GDP-mannose dehydrogenase family. In terms of assembly, homodimer.

The catalysed reaction is UDP-N-acetyl-alpha-D-mannosamine + 2 NAD(+) + H2O = UDP-N-acetyl-alpha-D-mannosaminouronate + 2 NADH + 3 H(+). In terms of biological role, catalyzes the four-electron oxidation of UDP-N-acetyl-D-mannosamine (UDP-ManNAc), reducing NAD(+) and releasing UDP-N-acetylmannosaminuronic acid (UDP-ManNAcA). This is UDP-N-acetyl-D-mannosamine dehydrogenase from Pyrococcus horikoshii (strain ATCC 700860 / DSM 12428 / JCM 9974 / NBRC 100139 / OT-3).